The chain runs to 496 residues: Lysine--tRNA ligase (496 aa).

2 residues coordinate Mg(2+): glutamate 409 and glutamate 416.

Belongs to the class-II aminoacyl-tRNA synthetase family. In terms of assembly, homodimer. The cofactor is Mg(2+).

The protein localises to the cytoplasm. It catalyses the reaction tRNA(Lys) + L-lysine + ATP = L-lysyl-tRNA(Lys) + AMP + diphosphate. This chain is Lysine--tRNA ligase, found in Streptococcus agalactiae serotype III (strain NEM316).